Consider the following 423-residue polypeptide: Histidine--tRNA ligase 2 (423 aa).

The protein belongs to the class-II aminoacyl-tRNA synthetase family. Homodimer.

Its subcellular location is the cytoplasm. The catalysed reaction is tRNA(His) + L-histidine + ATP = L-histidyl-tRNA(His) + AMP + diphosphate + H(+). The sequence is that of Histidine--tRNA ligase 2 from Bacillus cereus (strain ATCC 14579 / DSM 31 / CCUG 7414 / JCM 2152 / NBRC 15305 / NCIMB 9373 / NCTC 2599 / NRRL B-3711).